Reading from the N-terminus, the 960-residue chain is Cyclin-dependent kinase-like 5 (960 aa).

The region spanning 13–297 (FEILGVVGEG…TEQCLNHPTF (285 aa)) is the Protein kinase domain. ATP is bound by residues 19–27 (VGEGAYGVV) and Lys-42. Residue Asp-135 is the Proton acceptor of the active site. 4 disordered regions span residues 300–349 (QRLL…IQNL), 382–566 (KTYQ…RHSK), 646–834 (SPQP…TQSQ), and 848–960 (ASNH…ETAL). 2 stretches are compositionally biased toward polar residues: residues 319–336 (ESST…TALQ) and 382–402 (KTYQ…NNNI). Position 407 is a phosphoserine (Ser-407). The segment covering 407-417 (SPKEAKSKTEF) has biased composition (basic and acidic residues). 3 stretches are compositionally biased toward polar residues: residues 434–462 (LKSN…QPNE), 473–482 (IPQSSRSPSY), and 510–548 (EPST…SGRN). Ser-479 is modified (phosphoserine). Basic and acidic residues-rich tracts occupy residues 549 to 559 (NRNEGTLDSRR) and 679 to 704 (QKSE…RHLY). Ser-720 carries the post-translational modification Phosphoserine. A compositionally biased stretch (polar residues) spans 728–748 (HENNVSTRVSSLPSESSSGTN). Phosphoserine is present on Ser-761. Positions 769 to 778 (EQLKEKEKQG) are enriched in basic and acidic residues. Residues 791-816 (QTVPNSDSPDLLTLQKSIHSASTPSS) show a composition bias toward polar residues. A compositionally biased stretch (basic and acidic residues) spans 817–827 (RPKEWRPEKIS). Composition is skewed to polar residues over residues 862–872 (LTAQQTKNSFS), 880–890 (SQASGGSSNIR), and 914–928 (SSVT…SYSE).

The protein belongs to the protein kinase superfamily. CMGC Ser/Thr protein kinase family. CDC2/CDKX subfamily. As to quaternary structure, interacts with MECP2. Autophosphorylated. Expressed in brain, lung, kidney, prostate, ovary, placenta, pancreas and testis. In terms of tissue distribution, predominant transcript in brain.

The protein resides in the nucleus. The protein localises to the cytoplasm. Its subcellular location is the cytoskeleton. It is found in the cilium basal body. It localises to the microtubule organizing center. The protein resides in the centrosome. The enzyme catalyses L-seryl-[protein] + ATP = O-phospho-L-seryl-[protein] + ADP + H(+). It catalyses the reaction L-threonyl-[protein] + ATP = O-phospho-L-threonyl-[protein] + ADP + H(+). Mediates phosphorylation of MECP2. May regulate ciliogenesis. This is Cyclin-dependent kinase-like 5 from Homo sapiens (Human).